Consider the following 418-residue polypeptide: Serine hydroxymethyltransferase (418 aa).

(6S)-5,6,7,8-tetrahydrofolate is bound by residues L121 and 125 to 127 (GHL). N6-(pyridoxal phosphate)lysine is present on K230. 355–357 (SPF) provides a ligand contact to (6S)-5,6,7,8-tetrahydrofolate.

This sequence belongs to the SHMT family. As to quaternary structure, homodimer. Requires pyridoxal 5'-phosphate as cofactor.

It is found in the cytoplasm. The catalysed reaction is (6R)-5,10-methylene-5,6,7,8-tetrahydrofolate + glycine + H2O = (6S)-5,6,7,8-tetrahydrofolate + L-serine. Its pathway is one-carbon metabolism; tetrahydrofolate interconversion. It participates in amino-acid biosynthesis; glycine biosynthesis; glycine from L-serine: step 1/1. Functionally, catalyzes the reversible interconversion of serine and glycine with tetrahydrofolate (THF) serving as the one-carbon carrier. This reaction serves as the major source of one-carbon groups required for the biosynthesis of purines, thymidylate, methionine, and other important biomolecules. Also exhibits THF-independent aldolase activity toward beta-hydroxyamino acids, producing glycine and aldehydes, via a retro-aldol mechanism. The polypeptide is Serine hydroxymethyltransferase (Alcanivorax borkumensis (strain ATCC 700651 / DSM 11573 / NCIMB 13689 / SK2)).